Here is a 310-residue protein sequence, read N- to C-terminus: Cytochrome P450 monooxygenase ppzG (310 aa).

Cysteine 288 contacts heme.

It belongs to the cytochrome P450 family. The cofactor is heme.

The protein operates within secondary metabolite biosynthesis. Its function is as follows. Cytochrome P450 monooxygenase; part of the gene cluster that mediates the biosynthesis of pyrrolopyrazines, secondary metabolites showing insecticidal activity. The role of ppzG within the pathway has still to be determined. The single multifunctional NRPS ppzA is sufficient to produce peramine via condensation of 1-pyrroline-5-carboxylate and arginine, N-methylation of the alpha-amino group of arginine and reduction of the thioester and the cyclization to form an iminium ion resulting in release from the peptide synthetase. Deprotonation of this intermediate and oxidation of the pyrroline ring would give rise to peramine. In Epichloe species that produce only peramine, the peramine synthetase gene is not localized in a gene cluster, in contrast to Metarhizium species that contain additional pyrrolopyrazine biosynthesis genes. The 2-oxoglutarate-Fe(II) type oxidoreductase ppzC hydroxylates peramine to yield the newly identified compound 8-hydroxyperamine whereas ppzD converts L-proline into trans-4-hydroxy-L-proline, a precursor of peramine biosynthesis. This chain is Cytochrome P450 monooxygenase ppzG (ppzG), found in Metarhizium majus (strain ARSEF 297).